The primary structure comprises 76 residues: ATP synthase subunit c (76 aa).

The next 2 helical transmembrane spans lie at 5–25 and 54–74; these read GIIAIAAAIAAFTGIGAGIGI and AALAEATAIYGLVVALVLVFL.

The protein belongs to the ATPase C chain family. In terms of assembly, F-type ATPases have 2 components, F(1) - the catalytic core - and F(0) - the membrane proton channel. F(1) has five subunits: alpha(3), beta(3), gamma(1), delta(1), epsilon(1). F(0) has three main subunits: a(1), b(2) and c(10-14). The alpha and beta chains form an alternating ring which encloses part of the gamma chain. F(1) is attached to F(0) by a central stalk formed by the gamma and epsilon chains, while a peripheral stalk is formed by the delta and b chains.

It is found in the cell membrane. In terms of biological role, f(1)F(0) ATP synthase produces ATP from ADP in the presence of a proton or sodium gradient. F-type ATPases consist of two structural domains, F(1) containing the extramembraneous catalytic core and F(0) containing the membrane proton channel, linked together by a central stalk and a peripheral stalk. During catalysis, ATP synthesis in the catalytic domain of F(1) is coupled via a rotary mechanism of the central stalk subunits to proton translocation. Functionally, key component of the F(0) channel; it plays a direct role in translocation across the membrane. A homomeric c-ring of between 10-14 subunits forms the central stalk rotor element with the F(1) delta and epsilon subunits. In Ruminiclostridium cellulolyticum (strain ATCC 35319 / DSM 5812 / JCM 6584 / H10) (Clostridium cellulolyticum), this protein is ATP synthase subunit c.